The primary structure comprises 1185 residues: Chromosome partition protein Smc (1185 aa).

32–39 lines the ATP pocket; the sequence is PNGSGKSN. A coiled-coil region spans residues 228–503; sequence SRLVKKLTIA…LQAVQERYTN (276 aa). Residues 300–323 form a disordered region; it reads TQGQQGVDAERRQNQQSEQERLTA. Over residues 307–320 the composition is skewed to basic and acidic residues; sequence DAERRQNQQSEQER. The 119-residue stretch at 519-637 folds into the SMC hinge domain; sequence SGVAGAVSEL…VDTLDHAMAI (119 aa). 2 coiled-coil regions span residues 675 to 928 and 989 to 1025; these read QQQQ…RRLE and AIDEFERVKERFDFLNNQASDLTEAKEHLLQTMADLD.

This sequence belongs to the SMC family. Homodimer.

Its subcellular location is the cytoplasm. In terms of biological role, required for chromosome condensation and partitioning. This is Chromosome partition protein Smc from Lactiplantibacillus plantarum (strain ATCC BAA-793 / NCIMB 8826 / WCFS1) (Lactobacillus plantarum).